The following is a 663-amino-acid chain: Beta-galactosidase YesZ (663 aa).

A substrate-binding site is contributed by Arg-106. Cys-110 is a Zn(2+) binding site. Asn-144 lines the substrate pocket. Residue Glu-145 is the Proton donor of the active site. Residues Cys-153, Cys-155, and Cys-158 each coordinate Zn(2+). Glu-296 acts as the Nucleophile in catalysis. 345 to 348 (EISH) serves as a coordination point for substrate.

It belongs to the glycosyl hydrolase 42 family. As to quaternary structure, homotrimer.

It catalyses the reaction Hydrolysis of terminal non-reducing beta-D-galactose residues in beta-D-galactosides.. In terms of biological role, may play a role in the degradation of rhamnogalacturonan derived from plant cell walls. This Bacillus subtilis (strain 168) protein is Beta-galactosidase YesZ (yesZ).